A 173-amino-acid chain; its full sequence is Ribosome maturation factor RimM (173 aa).

A PRC barrel domain is found at 95–169 (PDEFYDHELE…TIVIDPPEGL (75 aa)).

It belongs to the RimM family. In terms of assembly, binds ribosomal protein uS19.

Its subcellular location is the cytoplasm. Its function is as follows. An accessory protein needed during the final step in the assembly of 30S ribosomal subunit, possibly for assembly of the head region. Essential for efficient processing of 16S rRNA. May be needed both before and after RbfA during the maturation of 16S rRNA. It has affinity for free ribosomal 30S subunits but not for 70S ribosomes. This is Ribosome maturation factor RimM from Mycolicibacterium smegmatis (strain ATCC 700084 / mc(2)155) (Mycobacterium smegmatis).